A 202-amino-acid chain; its full sequence is uncharacterized protein (202 aa).

Disordered stretches follow at residues 1-32 and 46-95; these read MRPE…ASLG and PSSV…PSYT. Low complexity predominate over residues 47–79; sequence SSVSLSSSSSRRSMPSLGSSRSSSLPSTGSLRS.

This is an uncharacterized protein from Equus caballus (Horse).